Consider the following 294-residue polypeptide: Protoheme IX farnesyltransferase (294 aa).

9 consecutive transmembrane segments (helical) span residues 24–44, 48–68, 96–116, 118–138, 145–165, 172–192, 224–244, 245–265, and 268–288; these read VVLLMLLTVIVGMYLAAPGWV, LIAFTLLGIGLCAGSAAAINH, ALWFAVIIGLMGLSLLILFVN, LTALLTFVTLIGYAGVYTGYL, NIVIGGLAGAAPPLLGWTAVT, ALLLVLIIFTWTPPHFWALAI, VLLLVVSLLPFVVSMSGWIYL, LGALVLGIRFLVWAHKLYFTD, and VVAMQTFRFSILYLMLLFVFL.

This sequence belongs to the UbiA prenyltransferase family. Protoheme IX farnesyltransferase subfamily.

The protein localises to the cell inner membrane. The catalysed reaction is heme b + (2E,6E)-farnesyl diphosphate + H2O = Fe(II)-heme o + diphosphate. Its pathway is porphyrin-containing compound metabolism; heme O biosynthesis; heme O from protoheme: step 1/1. Functionally, converts heme B (protoheme IX) to heme O by substitution of the vinyl group on carbon 2 of heme B porphyrin ring with a hydroxyethyl farnesyl side group. The protein is Protoheme IX farnesyltransferase of Legionella pneumophila (strain Corby).